Here is an 88-residue protein sequence, read N- to C-terminus: MKAKVGDWLVIKGATIDQPDHRGLIIEVRSSDGSPPYVVRWLETDHVATVIPGPDAVVVTAEEQNAADERAQHRFGAVQSAILHARGT.

This is an uncharacterized protein from Mycobacterium tuberculosis (strain CDC 1551 / Oshkosh).